The primary structure comprises 365 residues: UDP-N-acetylglucosamine--N-acetylmuramyl-(pentapeptide) pyrophosphoryl-undecaprenol N-acetylglucosamine transferase (365 aa).

Residues threonine 17 to glycine 19, asparagine 129, arginine 167, serine 194, isoleucine 250, alanine 269 to glutamate 274, and glutamine 295 contribute to the UDP-N-acetyl-alpha-D-glucosamine site.

It belongs to the glycosyltransferase 28 family. MurG subfamily.

It localises to the cell inner membrane. It carries out the reaction di-trans,octa-cis-undecaprenyl diphospho-N-acetyl-alpha-D-muramoyl-L-alanyl-D-glutamyl-meso-2,6-diaminopimeloyl-D-alanyl-D-alanine + UDP-N-acetyl-alpha-D-glucosamine = di-trans,octa-cis-undecaprenyl diphospho-[N-acetyl-alpha-D-glucosaminyl-(1-&gt;4)]-N-acetyl-alpha-D-muramoyl-L-alanyl-D-glutamyl-meso-2,6-diaminopimeloyl-D-alanyl-D-alanine + UDP + H(+). Its pathway is cell wall biogenesis; peptidoglycan biosynthesis. Functionally, cell wall formation. Catalyzes the transfer of a GlcNAc subunit on undecaprenyl-pyrophosphoryl-MurNAc-pentapeptide (lipid intermediate I) to form undecaprenyl-pyrophosphoryl-MurNAc-(pentapeptide)GlcNAc (lipid intermediate II). The protein is UDP-N-acetylglucosamine--N-acetylmuramyl-(pentapeptide) pyrophosphoryl-undecaprenol N-acetylglucosamine transferase of Shewanella sediminis (strain HAW-EB3).